The chain runs to 111 residues: Large ribosomal subunit protein uL24 (111 aa).

It belongs to the universal ribosomal protein uL24 family. In terms of assembly, part of the 50S ribosomal subunit.

Functionally, one of two assembly initiator proteins, it binds directly to the 5'-end of the 23S rRNA, where it nucleates assembly of the 50S subunit. One of the proteins that surrounds the polypeptide exit tunnel on the outside of the subunit. In Chlamydia muridarum (strain MoPn / Nigg), this protein is Large ribosomal subunit protein uL24.